Here is a 169-residue protein sequence, read N- to C-terminus: Putative ribonuclease VapC50 (169 aa).

Its function is as follows. Toxic component of a type II toxin-antitoxin (TA) system. An RNase. The cognate antitoxin is VapB50. The sequence is that of Putative ribonuclease VapC50 from Mycobacterium tuberculosis (strain ATCC 25618 / H37Rv).